The chain runs to 500 residues: Putative glucokinase-2 (500 aa).

Ser-2 is subject to N-acetylserine. Ser-2 carries the phosphoserine modification. Positions 12-498 (EALEDAVVEI…SGVGAALCAL (487 aa)) constitute a Hexokinase domain. The segment at 74 to 217 (NGTERGVLLA…LSMINVVALT (144 aa)) is hexokinase small subdomain. Residue Lys-110 participates in ATP binding. Positions 159–185 (KMGFTFSYPVDQTSLSSGTLIRWTKSF) are glucose-binding. Positions 218–487 (NDTVGTFLSH…RKIHLRLAKD (270 aa)) are hexokinase large subdomain. At Ser-470 the chain carries Phosphoserine. 487 to 492 (DGSGVG) is an ATP binding site.

The protein belongs to the hexokinase family.

It is found in the cytoplasm. The enzyme catalyses D-glucose + ATP = D-glucose 6-phosphate + ADP + H(+). Its pathway is carbohydrate degradation; glycolysis; D-glyceraldehyde 3-phosphate and glycerone phosphate from D-glucose: step 1/4. Its function is as follows. Putative glucokinase involved in phosphorylation of aldohexoses and glucose uptake. Involved in sporulation. Required for the full activation of the early meiotic inducer IME1. The polypeptide is Putative glucokinase-2 (EMI2) (Saccharomyces cerevisiae (strain ATCC 204508 / S288c) (Baker's yeast)).